The chain runs to 255 residues: Tryptophan synthase alpha chain (255 aa).

Residues glutamate 51 and aspartate 62 each act as proton acceptor in the active site.

It belongs to the TrpA family. Tetramer of two alpha and two beta chains.

It carries out the reaction (1S,2R)-1-C-(indol-3-yl)glycerol 3-phosphate + L-serine = D-glyceraldehyde 3-phosphate + L-tryptophan + H2O. It participates in amino-acid biosynthesis; L-tryptophan biosynthesis; L-tryptophan from chorismate: step 5/5. The alpha subunit is responsible for the aldol cleavage of indoleglycerol phosphate to indole and glyceraldehyde 3-phosphate. The chain is Tryptophan synthase alpha chain from Maridesulfovibrio salexigens (strain ATCC 14822 / DSM 2638 / NCIMB 8403 / VKM B-1763) (Desulfovibrio salexigens).